The chain runs to 544 residues: Chaperonin GroEL (544 aa).

Residues 29–32, Lys-50, 86–90, Gly-414, and Asp-494 each bind ATP; these read TLGP and DGTTT.

This sequence belongs to the chaperonin (HSP60) family. In terms of assembly, forms a cylinder of 14 subunits composed of two heptameric rings stacked back-to-back. Interacts with the co-chaperonin GroES.

Its subcellular location is the cytoplasm. It carries out the reaction ATP + H2O + a folded polypeptide = ADP + phosphate + an unfolded polypeptide.. In terms of biological role, together with its co-chaperonin GroES, plays an essential role in assisting protein folding. The GroEL-GroES system forms a nano-cage that allows encapsulation of the non-native substrate proteins and provides a physical environment optimized to promote and accelerate protein folding. The chain is Chaperonin GroEL from Amoebophilus asiaticus (strain 5a2).